The primary structure comprises 35 residues: Z-limacoditoxin(1)-Dv4 (35 aa).

The N-terminal stretch at 1–22 (MKKTFLPIFLVILLASYALGNP) is a signal peptide. The residue at position 23 (Gln-23) is a Pyrrolidone carboxylic acid. The residue at position 32 (Pro-32) is a Proline amide.

It belongs to the limacoditoxin-1 (ACP-like) family. As to expression, expressed by the venom secretory cell of the spine. The spine is a cuticular structure containing a single large nucleated venom-secreting cell at its base. It is an independent unit capable of producing, storing and injecting venom. On the back of D.vulnerans caterpillars, spines are grouped together by 50 to 100 to form scoli, of which there are eight in D.vulnerans.

Its subcellular location is the secreted. Its function is as follows. Potently activates insect GPCR. More precisely, it activates the ACP receptor (ACPR) from the mosquito A.aegypti (EC(50)=3.07 nM) with a potency comparable to that of the endogenous ligand. Has no activity on receptors of the closely related neuropeptides adipokinetic hormone and corazonin. In vivo, does not reveal any observable effects when injected into crickets (A.domesticus). Does not induce increase in intracellular calcium in mouse DRG neurons, suggesting that it does not induce pain. The polypeptide is Z-limacoditoxin(1)-Dv4 (Doratifera vulnerans (Mottled cup moth)).